We begin with the raw amino-acid sequence, 365 residues long: DNA polymerase IV 1 (365 aa).

Residues 6 to 196 (VLHIDMDYFF…LNVSKLWGIG (191 aa)) form the UmuC domain. 2 residues coordinate Mg(2+): Asp10 and Asp113. The active site involves Glu114.

Belongs to the DNA polymerase type-Y family. Monomer. Mg(2+) is required as a cofactor.

It is found in the cytoplasm. It carries out the reaction DNA(n) + a 2'-deoxyribonucleoside 5'-triphosphate = DNA(n+1) + diphosphate. Poorly processive, error-prone DNA polymerase involved in untargeted mutagenesis. Copies undamaged DNA at stalled replication forks, which arise in vivo from mismatched or misaligned primer ends. These misaligned primers can be extended by PolIV. Exhibits no 3'-5' exonuclease (proofreading) activity. May be involved in translesional synthesis. This is DNA polymerase IV 1 (dbh1) from Methanosarcina mazei (strain ATCC BAA-159 / DSM 3647 / Goe1 / Go1 / JCM 11833 / OCM 88) (Methanosarcina frisia).